Reading from the N-terminus, the 111-residue chain is Nucleoid-associated protein PSEEN1789 (111 aa).

Disordered stretches follow at residues 1–25 (MMKG…KMQE) and 89–111 (NSQD…KMPF).

It belongs to the YbaB/EbfC family. As to quaternary structure, homodimer.

It is found in the cytoplasm. The protein localises to the nucleoid. Its function is as follows. Binds to DNA and alters its conformation. May be involved in regulation of gene expression, nucleoid organization and DNA protection. The protein is Nucleoid-associated protein PSEEN1789 of Pseudomonas entomophila (strain L48).